The primary structure comprises 226 residues: V-type proton ATPase subunit E 1 (226 aa).

A2 is modified (N-acetylalanine). Y56 carries the phosphotyrosine modification.

It belongs to the V-ATPase E subunit family. V-ATPase is a heteromultimeric enzyme made up of two complexes: the ATP-hydrolytic V1 complex and the proton translocation V0 complex. The V1 complex consists of three catalytic AB heterodimers that form a heterohexamer, three peripheral stalks each consisting of EG heterodimers, one central rotor including subunits D and F, and the regulatory subunits C and H. The proton translocation complex V0 consists of the proton transport subunit a, a ring of proteolipid subunits c9c'', rotary subunit d, subunits e and f, and the accessory subunits ATP6AP1/Ac45 and ATP6AP2/PRR. Interacts with RABL2/RABL2A; binds preferentially to GTP-bound RABL2. Interacts with ALDOC. Interacts with RAB11B. As to expression, kidney; localizes to early distal nephron, encompassing thick ascending limbs and distal convoluted tubules (at protein level). Ubiquitous. High expression in the skin.

The protein resides in the apical cell membrane. It is found in the cytoplasmic vesicle. The protein localises to the secretory vesicle. Its subcellular location is the synaptic vesicle membrane. It localises to the clathrin-coated vesicle membrane. Subunit of the V1 complex of vacuolar(H+)-ATPase (V-ATPase), a multisubunit enzyme composed of a peripheral complex (V1) that hydrolyzes ATP and a membrane integral complex (V0) that translocates protons. V-ATPase is responsible for acidifying and maintaining the pH of intracellular compartments and in some cell types, is targeted to the plasma membrane, where it is responsible for acidifying the extracellular environment. The protein is V-type proton ATPase subunit E 1 (ATP6V1E1) of Homo sapiens (Human).